The primary structure comprises 215 residues: 16S rRNA (adenine(1408)-N(1))-methyltransferase (215 aa).

S-adenosyl-L-methionine contacts are provided by residues Gly-32, Asp-55, 87–88 (AE), 102–107 (LMPWGS), and 191–193 (TSW).

It belongs to the methyltransferase superfamily. Kanamycin-apramycin resistance family.

The enzyme catalyses adenosine(1408) in 16S rRNA + S-adenosyl-L-methionine = N(1)-methyladenosine(1408) in 16S rRNA + S-adenosyl-L-homocysteine + H(+). Functionally, specifically methylates the N(1) position of adenine 1408 in 16S rRNA. Confers resistance to various aminoglycosides, including kanamycin, neomycin and apramycin. The polypeptide is 16S rRNA (adenine(1408)-N(1))-methyltransferase (kamB) (Streptoalloteichus tenebrarius (strain ATCC 17920 / DSM 40477 / JCM 4838 / CBS 697.72 / NBRC 16177 / NCIMB 11028 / NRRL B-12390 / A12253. 1 / ISP 5477) (Streptomyces tenebrarius)).